Reading from the N-terminus, the 105-residue chain is Malonate decarboxylase acyl carrier protein (105 aa).

S28 is modified (O-(phosphoribosyl dephospho-coenzyme A)serine).

Belongs to the MdcC family. Post-translationally, covalently binds the prosthetic group of malonate decarboxylase.

The protein localises to the cytoplasm. Subunit of malonate decarboxylase, it is an acyl carrier protein to which acetyl and malonyl thioester residues are bound via a 2'-(5''-phosphoribosyl)-3'-dephospho-CoA prosthetic group and turn over during the catalytic mechanism. The protein is Malonate decarboxylase acyl carrier protein of Xanthomonas axonopodis pv. citri (strain 306).